The primary structure comprises 419 residues: Histidine--tRNA ligase (419 aa).

Belongs to the class-II aminoacyl-tRNA synthetase family. As to quaternary structure, homodimer.

The protein localises to the cytoplasm. It catalyses the reaction tRNA(His) + L-histidine + ATP = L-histidyl-tRNA(His) + AMP + diphosphate + H(+). The chain is Histidine--tRNA ligase from Syntrophotalea carbinolica (strain DSM 2380 / NBRC 103641 / GraBd1) (Pelobacter carbinolicus).